The sequence spans 528 residues: Na(+)/H(+) antiporter NhaB (528 aa).

11 consecutive transmembrane segments (helical) span residues 23–43 (VAII…DPFV), 45–65 (GWLL…CYPL), 90–110 (LVAN…IYFM), 136–156 (CFAA…AVVI), 204–224 (LLMH…VGEP), 242–262 (IRMA…CAIV), 305–325 (GLIA…VGLI), 350–370 (EEAL…AVII), 392–412 (LALF…VFVG), 450–470 (ATPN…APLI), and 479–499 (IMAL…IMFF).

Belongs to the NhaB Na(+)/H(+) (TC 2.A.34) antiporter family.

Its subcellular location is the cell inner membrane. It catalyses the reaction 2 Na(+)(in) + 3 H(+)(out) = 2 Na(+)(out) + 3 H(+)(in). In terms of biological role, na(+)/H(+) antiporter that extrudes sodium in exchange for external protons. The protein is Na(+)/H(+) antiporter NhaB of Vibrio campbellii (strain ATCC BAA-1116).